The primary structure comprises 70 residues: Ribosome modulation factor (70 aa).

The protein belongs to the ribosome modulation factor family.

Its subcellular location is the cytoplasm. During stationary phase, converts 70S ribosomes to an inactive dimeric form (100S ribosomes). The polypeptide is Ribosome modulation factor (Marinobacter adhaerens (strain DSM 23420 / HP15)).